A 298-amino-acid polypeptide reads, in one-letter code: Factor-induced gene 1 protein (298 aa).

4 consecutive transmembrane segments (helical) span residues 17–37 (IFAL…LIGC), 163–183 (VLMA…YVTV), 195–215 (FLLL…MWTH), and 243–263 (VMAW…WLIF). Ser-288 is modified (phosphoserine). Thr-293 bears the Phosphothreonine mark. The residue at position 296 (Ser-296) is a Phosphoserine.

It localises to the membrane. Required for efficient mating. This Saccharomyces cerevisiae (strain ATCC 204508 / S288c) (Baker's yeast) protein is Factor-induced gene 1 protein (FIG1).